We begin with the raw amino-acid sequence, 601 residues long: Proline--tRNA ligase (601 aa).

It belongs to the class-II aminoacyl-tRNA synthetase family. ProS type 1 subfamily. In terms of assembly, homodimer.

It is found in the cytoplasm. It carries out the reaction tRNA(Pro) + L-proline + ATP = L-prolyl-tRNA(Pro) + AMP + diphosphate. Its function is as follows. Catalyzes the attachment of proline to tRNA(Pro) in a two-step reaction: proline is first activated by ATP to form Pro-AMP and then transferred to the acceptor end of tRNA(Pro). As ProRS can inadvertently accommodate and process non-cognate amino acids such as alanine and cysteine, to avoid such errors it has two additional distinct editing activities against alanine. One activity is designated as 'pretransfer' editing and involves the tRNA(Pro)-independent hydrolysis of activated Ala-AMP. The other activity is designated 'posttransfer' editing and involves deacylation of mischarged Ala-tRNA(Pro). The misacylated Cys-tRNA(Pro) is not edited by ProRS. The polypeptide is Proline--tRNA ligase (Trichodesmium erythraeum (strain IMS101)).